The primary structure comprises 563 residues: MFNELFRKVVEAISKASKFTPEEIAACMERSYQPKKPNVTLFLDRISPSPQEDAKELLETLAGANIELIENLAIRKSSVCCDINKRAILKDVLGYIQKNREIFGNNNVGKGKRMVVEYSSPNIAKIFHIGHLRTTVLGQFIVNLLRASGYETTSINYFGDWGKQFGFVLLGYSKYGSEEELEKDPLKHLFNVYVKISADAEKNPDVDSEAKEIFRMMEEDKDEWCMNLWRRFRELSIEKYKVLYKRLNVEFDVYSGESMYNEKGKSIVETSKQIKTDEDGSKVFDLGKAGKVLVMKNDGTTLYITRDIAAAIERLEEYSPEKIIYVVSSEQNKHFEDLFGVLEMLGYDKDKFQHVSYGLVAGMSTRAGKVQLLEDIIQESTEVMKNVMMSDNNKGSFTAAEMDQTAEVLAISTLLVMDFTARRVKGYEFDIEKRARNTSGTGLYLQYAHCRLRSIETKNSNVDYNDIETIDFELIHVPKVLNLVYKLLWFEHVVEKCLEDYEPSRIVTYLQDLASSINGAINILRVLGVDKELARARLLVLSSARIVLHNGLRILGATPLNKM.

The protein belongs to the class-I aminoacyl-tRNA synthetase family. In terms of assembly, monomer.

The catalysed reaction is tRNA(Arg) + L-arginine + ATP = L-arginyl-tRNA(Arg) + AMP + diphosphate. The polypeptide is Arginine--tRNA ligase (Encephalitozoon cuniculi (strain GB-M1) (Microsporidian parasite)).